The primary structure comprises 93 residues: Cell division topological specificity factor (93 aa).

This sequence belongs to the MinE family.

Prevents the cell division inhibition by proteins MinC and MinD at internal division sites while permitting inhibition at polar sites. This ensures cell division at the proper site by restricting the formation of a division septum at the midpoint of the long axis of the cell. The polypeptide is Cell division topological specificity factor (Alkaliphilus oremlandii (strain OhILAs) (Clostridium oremlandii (strain OhILAs))).